Here is a 400-residue protein sequence, read N- to C-terminus: Protein phosphatase methylesterase 1 (400 aa).

The segment at aspartate 32–glutamate 70 is disordered. Residues proline 114–serine 365 enclose the AB hydrolase-1 domain. Active-site residues include serine 205, aspartate 233, and histidine 359.

The protein belongs to the AB hydrolase superfamily. In terms of assembly, interacts with and inactivates the phosphatase PP2A-like catalytic subunits PPG1, PPH21, PPH22, PPH3 and SIT4.

It carries out the reaction [phosphatase 2A protein]-C-terminal L-leucine methyl ester + H2O = [phosphatase 2A protein]-C-terminal L-leucine + methanol + H(+). In terms of biological role, demethylates proteins that have been reversibly carboxymethylated. Demethylates the phosphatase PP2A catalytic subunits PPH21 and PPH22. Forms inactive complexes (PP2Ai) with phosphatase PP2A-like catalytic subunits. Involved in the regulation of cell cycle progression at START. The chain is Protein phosphatase methylesterase 1 (PPE1) from Saccharomyces cerevisiae (strain ATCC 204508 / S288c) (Baker's yeast).